Reading from the N-terminus, the 211-residue chain is Uridine kinase (211 aa).

12–19 (GGTGSGKT) lines the ATP pocket.

Belongs to the uridine kinase family.

Its subcellular location is the cytoplasm. It carries out the reaction uridine + ATP = UMP + ADP + H(+). It catalyses the reaction cytidine + ATP = CMP + ADP + H(+). The protein operates within pyrimidine metabolism; CTP biosynthesis via salvage pathway; CTP from cytidine: step 1/3. Its pathway is pyrimidine metabolism; UMP biosynthesis via salvage pathway; UMP from uridine: step 1/1. The polypeptide is Uridine kinase (Halalkalibacterium halodurans (strain ATCC BAA-125 / DSM 18197 / FERM 7344 / JCM 9153 / C-125) (Bacillus halodurans)).